The sequence spans 756 residues: Putative DNA ligase 052L (756 aa).

The N6-AMP-lysine intermediate role is filled by lysine 103. Residues 610–620 are compositionally biased toward low complexity; the sequence is PSAAGSASPCR. A disordered region spans residues 610–630; that stretch reads PSAAGSASPCRPTKRRDDWFD. In terms of domain architecture, BRCT spans 648–742; the sequence is KKRPPMQGYV…LKRQRKCRAR (95 aa).

Belongs to the NAD-dependent DNA ligase family.

The catalysed reaction is NAD(+) + (deoxyribonucleotide)n-3'-hydroxyl + 5'-phospho-(deoxyribonucleotide)m = (deoxyribonucleotide)n+m + AMP + beta-nicotinamide D-nucleotide.. In terms of biological role, catalyzes the formation of phosphodiester linkages between 5'-phosphoryl and 3'-hydroxyl groups in double-stranded DNA using NAD as a coenzyme and as the energy source for the reaction. This Invertebrate iridescent virus 3 (IIV-3) protein is Putative DNA ligase 052L.